The primary structure comprises 226 residues: 2-dehydro-3-deoxy-phosphogluconate aldolase (226 aa).

Glu-57 (proton acceptor) is an active-site residue. Residues Arg-61, Thr-85, and Lys-145 each contribute to the pyruvate site. Lys-145 acts as the Schiff-base intermediate with substrate in catalysis.

It belongs to the KHG/KDPG aldolase family. Homotrimer.

The enzyme catalyses 2-dehydro-3-deoxy-6-phospho-D-gluconate = D-glyceraldehyde 3-phosphate + pyruvate. It functions in the pathway carbohydrate acid metabolism; 2-dehydro-3-deoxy-D-gluconate degradation; D-glyceraldehyde 3-phosphate and pyruvate from 2-dehydro-3-deoxy-D-gluconate: step 2/2. Involved in the degradation of glucose via the Entner-Doudoroff pathway. Catalyzes the reversible, stereospecific retro-aldol cleavage of 2-keto-3-deoxy-6-phosphogluconate (KDPG) to pyruvate and D-glyceraldehyde-3-phosphate. In Pseudomonas putida (Arthrobacter siderocapsulatus), this protein is 2-dehydro-3-deoxy-phosphogluconate aldolase.